Reading from the N-terminus, the 562-residue chain is MFS-type transporter calB (562 aa).

Over residues 1-16 (MDEVTRTAQRSPSITE) the composition is skewed to polar residues. The disordered stretch occupies residues 1 to 45 (MDEVTRTAQRSPSITETHAGETKLAGPGEKEGDVESPVDPSADSE). A helical membrane pass occupies residues 57–77 (FAILASVTLSAFLMLLDGSII). A glycan (N-linked (GlcNAc...) asparagine) is linked at N83. 13 helical membrane-spanning segments follow: residues 94-113 (IGWY…PLSG), 123-143 (WTYL…GVAN), 154-174 (VAGL…AGAV), 184-204 (GIYL…GGAL), 213-233 (CFYI…FLQV), 256-276 (LIGF…LYYG), 284-304 (SSQV…FALW), 329-349 (INGA…PIYF), 362-382 (VNTL…GVLV), 389-409 (LPFA…VTLF), 418-438 (WIGY…MGII), 451-471 (VGIA…VVVG), and 530-550 (VFYL…GMGW). N557 is a glycosylation site (N-linked (GlcNAc...) asparagine).

This sequence belongs to the major facilitator superfamily. TCR/Tet family.

It localises to the cell membrane. MFS-type transporter; part of the gene cluster that mediates the biosynthesis of calbistrin A and related compounds. Calbistrin A is a secondary metabolite with an interesting structure that was recently found to have bioactivity against leukemia cells. It consists of two polyketides linked by an ester bond: a bicyclic decalin containing polyketide and a linear 12 carbon dioic acid structure. Required for the secretion of calbistrin A and calbistrin C, as well as of related compounds decumbenone A, B and C. This chain is MFS-type transporter calB, found in Penicillium decumbens.